Consider the following 230-residue polypeptide: Urease accessory protein UreG (230 aa).

Residues 1-31 are disordered; sequence MPPHFLSADSTGQPHRHADRPKRVRTPGEPL. Residues 14–25 show a composition bias toward basic residues; it reads PHRHADRPKRVR. 37-44 is a GTP binding site; it reads GPVGSGKT.

The protein belongs to the SIMIBI class G3E GTPase family. UreG subfamily. Homodimer. UreD, UreF and UreG form a complex that acts as a GTP-hydrolysis-dependent molecular chaperone, activating the urease apoprotein by helping to assemble the nickel containing metallocenter of UreC. The UreE protein probably delivers the nickel.

Its subcellular location is the cytoplasm. Its function is as follows. Facilitates the functional incorporation of the urease nickel metallocenter. This process requires GTP hydrolysis, probably effectuated by UreG. The protein is Urease accessory protein UreG of Mycobacterium sp. (strain JLS).